A 271-amino-acid chain; its full sequence is Calretinin (271 aa).

EF-hand domains are found at residues 16-51 (LTAT…LEKA), 63-98 (NLGE…EENF), 107-142 (GSST…LLKK), 151-186 (KLQE…QENF), 195-230 (LTSE…LYEK), and 235-270 (MNIQ…SEPP). Ca(2+) contacts are provided by Asp29, Asp31, Asn33, Tyr35, Glu40, Asp76, Asn78, Asp80, Lys82, Glu87, Asp120, Asp122, Ser124, Tyr126, Glu131, Asp164, Asn166, Asp168, Lys170, Glu175, Asp208, Asp210, Ser212, Tyr214, and Glu219. Phosphotyrosine is present on Tyr214.

It belongs to the calbindin family.

It is found in the synapse. It localises to the cell projection. The protein resides in the dendrite. Its function is as follows. Calcium-binding protein involved in calcium homeostasis and signal transduction. It plays a critical role in buffering intracellular calcium levels and modulating calcium-dependent signaling pathways. Predominantly expressed in specific neuronal populations, influences synaptic plasticity and neuronal excitability, contributing to learning and memory. During embryonic development, it facilitates neuronal differentiation and maturation. The protein is Calretinin (CALB2) of Bos taurus (Bovine).